Consider the following 912-residue polypeptide: MINSLLTRVFGSRNERQLRQLNRLVTQINALEPTIEKLSDAELQAKTPEFKQRLAAGESLDKILPEAFAVCREASRRVLGMRHYDVQLIGGMVLHLGKIAEMRTGEGKTLVATLPVYLNALEGQGVHVVTVNDYLARRDAAQMGKLYNWLGLSVGVVYPGMPHSDKHAAYAADITYGTNNEFGFDYLRDNMALSRADRYQRKLHYAIVDEVDSILIDEARTPLIISGPADESPELYIRVNRIVPQLTKQESEEGEGDYWIDEKGKQVHLSEAGMGHAEELLLQAGILENADDGLYAAQNLSVVHHLNAALRAHAIYQRDVDYIVRDGEVVIVDEFTGRTLSGRRWSDGLHQAVEAKEGVPVQRENQTLASITFQNLFRMYKKLSGMTGTADTEAYEFQSIYGLEVVVIPTNRPTVRKDHPDQVFLNRKGKFNAVLADIEDCAKRGQPVLVGTTSIETSEMLSEHLRKAGVKHEVLNAKQHEREATIVANAGQPGAVTIATNMAGRGTDIVLGGSLEAEYHALGEDATEEARFKIKTDWQRRHDAVKAAGGLHIIGTERHESRRIDNQLRGRAGRQGDPGSSRFYLSLEDNLMRIFASDWVQKAMRMMGMKEDDVIEDRLVSRQIEKAQRKVEAHNFDIRKNLLDFDDVNNDQRKVIYAQRDDLLDAESVKDNVDGIRGDVIYDLVARFVPPNSVDEQWDLQGLEATLESELGMPLALRELAKTQEELDAEQIAAKVQTAVDAHFAEKEAAVGADTMRALEKHVMLTVLDQGWKEHLAKMDYLRQGIYLRGYAQKQPKQEYKKEAFELFSEMLENVKREVINLLARVRIRSEEEVAELEEQERRQAEARLLASQFQHQDAGGYGADEEVEQMQGGNAPVPVSQVTRDEPKVGRNDPCPCGSGKKYKHCHGQLS.

ATP-binding positions include Gln-87, 105-109 (GEGKT), and Asp-508. The segment at 855–912 (QHQDAGGYGADEEVEQMQGGNAPVPVSQVTRDEPKVGRNDPCPCGSGKKYKHCHGQLS) is disordered. Cys-896, Cys-898, Cys-907, and His-908 together coordinate Zn(2+). Basic residues predominate over residues 902–912 (KKYKHCHGQLS).

This sequence belongs to the SecA family. In terms of assembly, monomer and homodimer. Part of the essential Sec protein translocation apparatus which comprises SecA, SecYEG and auxiliary proteins SecDF-YajC and YidC. Zn(2+) is required as a cofactor.

Its subcellular location is the cell inner membrane. The protein resides in the cytoplasm. It carries out the reaction ATP + H2O + cellular proteinSide 1 = ADP + phosphate + cellular proteinSide 2.. Functionally, part of the Sec protein translocase complex. Interacts with the SecYEG preprotein conducting channel. Has a central role in coupling the hydrolysis of ATP to the transfer of proteins into and across the cell membrane, serving both as a receptor for the preprotein-SecB complex and as an ATP-driven molecular motor driving the stepwise translocation of polypeptide chains across the membrane. This chain is Protein translocase subunit SecA, found in Xanthomonas campestris pv. campestris (strain B100).